Consider the following 1290-residue polypeptide: Nonribosomal peptide synthetase 6 (1290 aa).

The segment at 1–27 is disordered; the sequence is MTAIDVPWLSTPRRDNSHGTRSNSSCQ. The adenylation stretch occupies residues 260–657; that stretch reads SYQELDCQAS…AQVEHHLRSC (398 aa). Residues 775 to 851 enclose the Carrier domain; the sequence is APETELERKL…GLAQTHRHPV (77 aa). The residue at position 812 (S812) is an O-(pantetheine 4'-phosphoryl)serine. The segment at 846-870 is disordered; that stretch reads THRHPVRRAEVPRSSHDPDPFGRVR. Over residues 852 to 870 the composition is skewed to basic and acidic residues; the sequence is RRAEVPRSSHDPDPFGRVR. The condensation stretch occupies residues 914–1162; the sequence is GGQLDPEQLR…PCMNIIPVRV (249 aa).

It belongs to the NRP synthetase family.

Its function is as follows. Nonribosomal peptide synthesis (NRPS) is a key mechanism responsible for the biosynthesis of bioactive metabolites which are potentially contributing to organismal virulence. In Aspergillus fumigatus (strain ATCC MYA-4609 / CBS 101355 / FGSC A1100 / Af293) (Neosartorya fumigata), this protein is Nonribosomal peptide synthetase 6 (NRPS6).